Consider the following 255-residue polypeptide: 3-alpha-(or 20-beta)-hydroxysteroid dehydrogenase (255 aa).

An NAD(+)-binding site is contributed by isoleucine 10–valine 34. Serine 139 is a substrate binding site. The active-site Proton acceptor is tyrosine 152.

It belongs to the short-chain dehydrogenases/reductases (SDR) family. Homotetramer.

The enzyme catalyses androstan-3alpha,17beta-diol + NAD(+) = 17beta-hydroxyandrostanone + NADH + H(+). The protein operates within lipid metabolism; C21-steroid hormone metabolism. The chain is 3-alpha-(or 20-beta)-hydroxysteroid dehydrogenase from Streptomyces exfoliatus (Streptomyces hydrogenans).